The following is a 146-amino-acid chain: Hemoglobin cathodic subunit beta (146 aa).

Residues 2–146 enclose the Globin domain; that stretch reads QWSSSERSVI…VVSGLSKQYF (145 aa). His63 contributes to the heme b binding site.

Heterotetramer of two alpha and two beta chains. In terms of tissue distribution, red blood cells.

Functionally, involved in oxygen transport from the gills to various peripheral tissues. The polypeptide is Hemoglobin cathodic subunit beta (Ophisurus serpens (Serpent eel)).